Reading from the N-terminus, the 1441-residue chain is Remodeling and spacing factor 1 (1441 aa).

Positions 17-84 (PGSCPNFAVV…MRKIGKSVTA (68 aa)) constitute a DDT domain. Glycyl lysine isopeptide (Lys-Gly) (interchain with G-Cter in SUMO2) cross-links involve residues Lys136 and Lys215. A compositionally biased stretch (polar residues) spans 215-227 (KNSSQQDNSSRES). Residues 215–283 (KNSSQQDNSS…TTVKKEKEDE (69 aa)) are disordered. At Ser227 the chain carries Phosphoserine. Basic and acidic residues-rich tracts occupy residues 234 to 257 (ETKK…KSEE) and 274 to 283 (TTVKKEKEDE). Residues Lys236, Lys243, Lys248, Lys252, and Lys254 each participate in a glycyl lysine isopeptide (Lys-Gly) (interchain with G-Cter in SUMO2) cross-link. Residue Lys277 forms a Glycyl lysine isopeptide (Lys-Gly) (interchain with G-Cter in SUMO1); alternate linkage. Residue Lys277 forms a Glycyl lysine isopeptide (Lys-Gly) (interchain with G-Cter in SUMO2); alternate linkage. Glycyl lysine isopeptide (Lys-Gly) (interchain with G-Cter in SUMO2) cross-links involve residues Lys284, Lys288, Lys294, Lys305, Lys306, Lys309, Lys323, Lys327, Lys337, Lys342, Lys358, Lys373, Lys381, and Lys390. Residues 330–340 (RADPKDTKSSM) show a composition bias toward basic and acidic residues. Residues 330-385 (RADPKDTKSSMEKPVAQEPERIEFGGNIKSSHEITEKSTEETEKLKNDQQAKIPLK) are disordered. Positions 359 to 378 (SSHEITEKSTEETEKLKNDQ) are enriched in basic and acidic residues. A phosphoserine mark is found at Ser392 and Ser397. Residues Lys400, Lys405, Lys415, and Lys419 each participate in a glycyl lysine isopeptide (Lys-Gly) (interchain with G-Cter in SUMO2) cross-link. Ser429 is subject to Phosphoserine. Residue Lys439 forms a Glycyl lysine isopeptide (Lys-Gly) (interchain with G-Cter in SUMO2) linkage. A Glycyl lysine isopeptide (Lys-Gly) (interchain with G-Cter in SUMO1); alternate cross-link involves residue Lys456. Lys456 is covalently cross-linked (Glycyl lysine isopeptide (Lys-Gly) (interchain with G-Cter in SUMO2); alternate). Glycyl lysine isopeptide (Lys-Gly) (interchain with G-Cter in SUMO2) cross-links involve residues Lys463 and Lys468. A compositionally biased stretch (basic and acidic residues) spans 467–480 (TKEESYSPSKDRNI). Residues 467–634 (TKEESYSPSK…AAETSPPSNI (168 aa)) are disordered. Ser473 bears the Phosphoserine mark. A compositionally biased stretch (polar residues) spans 482–498 (TEGNGTESLNSVITSMK). A Glycyl lysine isopeptide (Lys-Gly) (interchain with G-Cter in SUMO2) cross-link involves residue Lys498. The segment covering 500–514 (GELEKETAPLRKDAD) has biased composition (basic and acidic residues). Ser524 carries the phosphoserine modification. Residues 552-562 (SKTALSSTESC) are compositionally biased toward polar residues. A Glycyl lysine isopeptide (Lys-Gly) (interchain with G-Cter in SUMO2) cross-link involves residue Lys565. Over residues 565-601 (KGEEKSPKTKKDKRPPILECLEKLEKSKKTFLDKDAQ) the composition is skewed to basic and acidic residues. 2 positions are modified to phosphoserine: Ser570 and Ser604. Residues 609–621 (EVPKSTLESEKPG) are compositionally biased toward basic and acidic residues. The residue at position 622 (Ser622) is a Phosphoserine. Thr628 is modified (phosphothreonine). A Phosphoserine modification is found at Ser629. Glycyl lysine isopeptide (Lys-Gly) (interchain with G-Cter in SUMO2) cross-links involve residues Lys662, Lys663, Lys670, Lys677, Lys698, and Lys709. Residues 675-887 (FTKVEMDNLD…EEKESEEAIL (213 aa)) form a disordered region. Ser748 is subject to Phosphoserine. 3 stretches are compositionally biased toward basic and acidic residues: residues 753-770 (LEPE…EKTN), 789-802 (AEIR…KRGE), and 816-831 (KTDK…KDTN). Glycyl lysine isopeptide (Lys-Gly) (interchain with G-Cter in SUMO2) cross-links involve residues Lys758, Lys768, Lys795, and Lys799. Residues 864–873 (GSGSEKSSAA) are compositionally biased toward low complexity. The span at 874-887 (SEEEEEKESEEAIL) shows a compositional bias: acidic residues. The residue at position 882 (Ser882) is a Phosphoserine. The PHD-type zinc finger occupies 891–941 (DEPCKKCGLPNHPELILLCDSCDSGYHTACLRPPLMIIPDGEWFCPPCQHK). The stretch at 942 to 1012 (LLCEKLEEQL…SKANLLERRS (71 aa)) forms a coiled coil. Residues 983–1007 (PPQEPDFSEDQEEKKKDSKKSKANL) form a disordered region. Lys1039 is covalently cross-linked (Glycyl lysine isopeptide (Lys-Gly) (interchain with G-Cter in SUMO2)). N6-acetyllysine is present on Lys1050. The interval 1063–1428 (ISTILDEERK…EEEEDELLRV (366 aa)) is disordered. 2 stretches are compositionally biased toward acidic residues: residues 1094-1107 (LDSD…ESED) and 1120-1141 (VVSD…DSDT). Phosphoserine occurs at positions 1096, 1098, and 1105. Basic residues predominate over residues 1146-1169 (RRLRRHPSRPMRQSRRLRRKTPKK). Acidic residues predominate over residues 1189-1199 (SDFSDDFSDDF). A compositionally biased stretch (basic residues) spans 1203–1212 (RRRRSRRNQK). Ser1221, Ser1223, and Ser1226 each carry phosphoserine. The segment covering 1229 to 1244 (SLRRGKEIRRVHKRRL) has biased composition (basic residues). A phosphoserine mark is found at Ser1258 and Ser1277. Phosphothreonine is present on Thr1278. The span at 1280-1292 (EYSEADEEEEEEE) shows a compositional bias: acidic residues. Residue Thr1305 is modified to Phosphothreonine. Ser1325 and Ser1336 each carry phosphoserine. Basic and acidic residues predominate over residues 1335–1344 (ESTKKPYRIE). Lys1339 is subject to N6-acetyllysine. Ser1345, Ser1359, and Ser1375 each carry phosphoserine. The segment covering 1394–1408 (PKDNSTASASLASNG) has biased composition (polar residues).

Component of the RSF-1 ISWI chromatin-remodeling complex at least composed of SMARCA1 and RSF1. Within the RSF-1 ISWI chromatin-remodeling complex interacts with SMARCA1. Component of the RSF-5 ISWI chromatin-remodeling complex (also called the RSF complex) at least composed of SMARCA5/SNF2H and RSF1. Within the RSF-5 ISWI chromatin-remodeling complex interacts with SMARCA5/SNF2H; the interaction is direct. Identified in a centromere complex containing histones H2A, H2B and H4, and at least CENPA, CENPB, CENPC, CENPT, CENPN, HJURP, SUPT16H, SSRP1 and RSF1. Also binds the HBV pX/HBx protein, which is required to activate transcription of the viral genome. Post-translationally, phosphorylated. In terms of tissue distribution, ubiquitously expressed. Highly expressed in the heart, skeletal muscle, kidney and placenta. Expressed at low levels in the brain and colon.

It is found in the nucleus. Its function is as follows. Regulatory subunit of the ATP-dependent RSF-1 and RSF-5 ISWI chromatin-remodeling complexes, which form ordered nucleosome arrays on chromatin and facilitate access to DNA during DNA-templated processes such as DNA replication, transcription, and repair. Binds to core histones together with SMARCA5, and is required for the assembly of regular nucleosome arrays by the RSF-5 ISWI chromatin-remodeling complex. Directly stimulates the ATPase activity of SMARCA1 and SMARCA5 in the RSF-1 and RSF-5 ISWI chromatin-remodeling complexes, respectively. The RSF-1 ISWI chromatin remodeling complex has a lower ATP hydrolysis rate than the RSF-5 ISWI chromatin-remodeling complex. The complexes do not have the ability to slide mononucleosomes to the center of a DNA template. Facilitates transcription of hepatitis B virus (HBV) genes by the pX transcription activator. In case of infection by HBV, together with pX, it represses TNF-alpha induced NF-kappa-B transcription activation. Represses transcription when artificially recruited to chromatin by fusion to a heterogeneous DNA binding domain. The sequence is that of Remodeling and spacing factor 1 (RSF1) from Homo sapiens (Human).